The sequence spans 31 residues: Protamine-YI (31 aa).

Residues 1–31 form a disordered region; the sequence is ARRRRSSSRPIRRRRPRRRTTRRRRAGRRRR.

As to expression, testis.

The protein localises to the nucleus. It is found in the chromosome. Functionally, protamines substitute for histones in the chromatin of sperm during the haploid phase of spermatogenesis. They compact sperm DNA into a highly condensed, stable and inactive complex. In Clupea harengus (Atlantic herring), this protein is Protamine-YI.